We begin with the raw amino-acid sequence, 282 residues long: NADPH-dependent 7-cyano-7-deazaguanine reductase (282 aa).

88 to 90 provides a ligand contact to substrate; the sequence is IES. 90 to 91 is a binding site for NADPH; sequence SK. Cys-190 serves as the catalytic Thioimide intermediate. Catalysis depends on Asp-197, which acts as the Proton donor. Position 229–230 (229–230) interacts with substrate; that stretch reads HE. Residue 258–259 coordinates NADPH; the sequence is RG.

Belongs to the GTP cyclohydrolase I family. QueF type 2 subfamily. In terms of assembly, homodimer.

Its subcellular location is the cytoplasm. It catalyses the reaction 7-aminomethyl-7-carbaguanine + 2 NADP(+) = 7-cyano-7-deazaguanine + 2 NADPH + 3 H(+). The protein operates within tRNA modification; tRNA-queuosine biosynthesis. In terms of biological role, catalyzes the NADPH-dependent reduction of 7-cyano-7-deazaguanine (preQ0) to 7-aminomethyl-7-deazaguanine (preQ1). This is NADPH-dependent 7-cyano-7-deazaguanine reductase from Escherichia coli O45:K1 (strain S88 / ExPEC).